The primary structure comprises 333 residues: Glyceraldehyde-3-phosphate dehydrogenase (333 aa).

Residues 11 to 12 (RI), Asp-32, and Arg-77 contribute to the NAD(+) site. Residues 148 to 150 (SCT), Thr-179, 208 to 209 (TG), and Arg-231 contribute to the D-glyceraldehyde 3-phosphate site. Cys-149 (nucleophile) is an active-site residue. Asn-313 provides a ligand contact to NAD(+).

Belongs to the glyceraldehyde-3-phosphate dehydrogenase family. As to quaternary structure, homotetramer.

The protein localises to the cytoplasm. The enzyme catalyses D-glyceraldehyde 3-phosphate + phosphate + NAD(+) = (2R)-3-phospho-glyceroyl phosphate + NADH + H(+). It participates in carbohydrate degradation; glycolysis; pyruvate from D-glyceraldehyde 3-phosphate: step 1/5. This chain is Glyceraldehyde-3-phosphate dehydrogenase (Gapdh), found in Glossina morsitans morsitans (Savannah tsetse fly).